An 87-amino-acid chain; its full sequence is uncharacterized protein (87 aa).

The next 2 helical transmembrane spans lie at 8-28 (IVVL…IFDL) and 47-67 (LAGS…LIGL).

The protein resides in the cell membrane. This is an uncharacterized protein from Bacillus subtilis (strain 168).